A 315-amino-acid polypeptide reads, in one-letter code: GTP cyclohydrolase MptA (315 aa).

This sequence belongs to the GTP cyclohydrolase IV family. Homodimer. Requires Fe(2+) as cofactor.

The enzyme catalyses GTP + H2O = 7,8-dihydroneopterin 2',3'-cyclic phosphate + formate + diphosphate + H(+). It functions in the pathway cofactor biosynthesis; 5,6,7,8-tetrahydromethanopterin biosynthesis. Converts GTP to 7,8-dihydro-D-neopterin 2',3'-cyclic phosphate, the first intermediate in the biosynthesis of coenzyme methanopterin. In Methanococcus maripaludis (strain C6 / ATCC BAA-1332), this protein is GTP cyclohydrolase MptA.